The following is a 145-amino-acid chain: Peptide methionine sulfoxide reductase MsrB (145 aa).

Residues 4–127 (SDELKQRIGD…NSAALKFIPY (124 aa)) form the MsrB domain. Cys-116 functions as the Nucleophile in the catalytic mechanism.

This sequence belongs to the MsrB Met sulfoxide reductase family.

The enzyme catalyses L-methionyl-[protein] + [thioredoxin]-disulfide + H2O = L-methionyl-(R)-S-oxide-[protein] + [thioredoxin]-dithiol. The polypeptide is Peptide methionine sulfoxide reductase MsrB (Streptococcus pyogenes serotype M18 (strain MGAS8232)).